The primary structure comprises 255 residues: Phosphoribosylformylglycinamidine synthase subunit PurQ (255 aa).

A Glutamine amidotransferase type-1 domain is found at 6–255; the sequence is TLILRTPGTN…TNAVKWARQV (250 aa). The active-site Nucleophile is Cys-96. Catalysis depends on residues His-217 and Glu-219.

In terms of assembly, part of the FGAM synthase complex composed of 1 PurL, 1 PurQ and 2 PurS subunits.

It localises to the cytoplasm. The catalysed reaction is N(2)-formyl-N(1)-(5-phospho-beta-D-ribosyl)glycinamide + L-glutamine + ATP + H2O = 2-formamido-N(1)-(5-O-phospho-beta-D-ribosyl)acetamidine + L-glutamate + ADP + phosphate + H(+). It carries out the reaction L-glutamine + H2O = L-glutamate + NH4(+). It participates in purine metabolism; IMP biosynthesis via de novo pathway; 5-amino-1-(5-phospho-D-ribosyl)imidazole from N(2)-formyl-N(1)-(5-phospho-D-ribosyl)glycinamide: step 1/2. Functionally, part of the phosphoribosylformylglycinamidine synthase complex involved in the purines biosynthetic pathway. Catalyzes the ATP-dependent conversion of formylglycinamide ribonucleotide (FGAR) and glutamine to yield formylglycinamidine ribonucleotide (FGAM) and glutamate. The FGAM synthase complex is composed of three subunits. PurQ produces an ammonia molecule by converting glutamine to glutamate. PurL transfers the ammonia molecule to FGAR to form FGAM in an ATP-dependent manner. PurS interacts with PurQ and PurL and is thought to assist in the transfer of the ammonia molecule from PurQ to PurL. The protein is Phosphoribosylformylglycinamidine synthase subunit PurQ of Dehalococcoides mccartyi (strain ATCC BAA-2266 / KCTC 15142 / 195) (Dehalococcoides ethenogenes (strain 195)).